A 225-amino-acid chain; its full sequence is Endoglucanase (225 aa).

Residues 1–15 (MKVFVVLAAIVAIAN) form the signal peptide. Asp29 serves as the catalytic Nucleophile. 7 disulfide bridges follow: Cys30-Cys152, Cys31-Cys66, Cys35-Cys103, Cys50-Cys74, Cys104-Cys219, Cys106-Cys209, and Cys176-Cys187. N-linked (GlcNAc...) asparagine glycosylation occurs at Asn55. Residue Asp138 is the Proton donor of the active site.

The protein belongs to the glycosyl hydrolase 45 (cellulase K) family. In terms of processing, N- and O-glycosylated. Contains hybrid- and complex-type N-glycans.

It localises to the secreted. It carries out the reaction Endohydrolysis of (1-&gt;4)-beta-D-glucosidic linkages in cellulose, lichenin and cereal beta-D-glucans.. Activity is not affected by metal ions except Mn(2+), which reduces the activity by 40-50%. However, no significant change in activity in response to 1 mM EDTA. Hydrolyzes carboxymethylcellulose (CMC). Also hydrolyzes lichenan and barley beta-1,4-D-glucan. CMC is hydrolyzed majorily to cellobiose (G2), cellotriose (G3) and cellotetraose (G4). Cellohexaose (G6) is hydrolyzed to G4 and G2 with traces of G3. Cellopentaose (G5) is completely hydrolyzed to G2 and G3, and G4 is partially hydrolyzed to G2. Does not hydrolyze G2 or G3. Does not hydrolyze crystalline cellulose, soluble starch, xylan, mannan or laminarin. The sequence is that of Endoglucanase from Cryptopygus antarcticus (Antarctic springtail).